A 349-amino-acid polypeptide reads, in one-letter code: Phosphoribosylformylglycinamidine cyclo-ligase (349 aa).

It belongs to the AIR synthase family.

The protein localises to the cytoplasm. It catalyses the reaction 2-formamido-N(1)-(5-O-phospho-beta-D-ribosyl)acetamidine + ATP = 5-amino-1-(5-phospho-beta-D-ribosyl)imidazole + ADP + phosphate + H(+). The protein operates within purine metabolism; IMP biosynthesis via de novo pathway; 5-amino-1-(5-phospho-D-ribosyl)imidazole from N(2)-formyl-N(1)-(5-phospho-D-ribosyl)glycinamide: step 2/2. This Psychrobacter arcticus (strain DSM 17307 / VKM B-2377 / 273-4) protein is Phosphoribosylformylglycinamidine cyclo-ligase.